Reading from the N-terminus, the 426-residue chain is D-tagatose-1,6-bisphosphate aldolase subunit KbaZ (426 aa).

This sequence belongs to the GatZ/KbaZ family. KbaZ subfamily. As to quaternary structure, forms a complex with KbaY.

It functions in the pathway carbohydrate metabolism; D-tagatose 6-phosphate degradation; D-glyceraldehyde 3-phosphate and glycerone phosphate from D-tagatose 6-phosphate: step 2/2. In terms of biological role, component of the tagatose-1,6-bisphosphate aldolase KbaYZ that is required for full activity and stability of the Y subunit. Could have a chaperone-like function for the proper and stable folding of KbaY. When expressed alone, KbaZ does not show any aldolase activity. The protein is D-tagatose-1,6-bisphosphate aldolase subunit KbaZ of Escherichia coli (strain ATCC 8739 / DSM 1576 / NBRC 3972 / NCIMB 8545 / WDCM 00012 / Crooks).